The following is a 401-amino-acid chain: CLIP domain-containing serine protease B9 (401 aa).

The first 26 residues, 1–26 (MTSYNRSVAWLTVCVLLALHIGGSHQ), serve as a signal peptide directing secretion. The region spanning 30 to 85 (QCTTPTRLRGRCISIYECDSILDYFKQRILTWEEREFLRKSQCTGATSGRQPFVCC) is the Clip domain. 3 disulfides stabilise this stretch: cysteine 31/cysteine 84, cysteine 41/cysteine 72, and cysteine 47/cysteine 85. Asparagine 88 is a glycosylation site (N-linked (GlcNAc...) asparagine). Positions 148 to 400 (IYGGQNADID…YMAWVRSNIK (253 aa)) constitute a Peptidase S1 domain. Residues cysteine 178 and cysteine 194 are joined by a disulfide bond. Active-site charge relay system residues include histidine 193 and aspartate 257. Disulfide bonds link cysteine 322/cysteine 339 and cysteine 349/cysteine 376. Asparagine 330 carries an N-linked (GlcNAc...) asparagine glycan. The active-site Charge relay system is serine 353.

Belongs to the peptidase S1 family. CLIP subfamily. As to quaternary structure, forms a covalent heterodimer with SRPN2; the interaction inhibits CLIPB9 protease activity. In terms of processing, proteolytic cleavage is necessary for activation.

The protein resides in the secreted. Its activity is regulated as follows. Inhibited by serpin SRPN2. Functionally, serine protease that functions in the melanization-mediated immune response. Cleaves and activates prophenoloxidase (PPO), which is required for the activation of the prophenoloxidase cascade probably following the recognition of pathogen-derived products. The polypeptide is CLIP domain-containing serine protease B9 (Anopheles gambiae (African malaria mosquito)).